A 555-amino-acid chain; its full sequence is Glucose-6-phosphate isomerase (555 aa).

Catalysis depends on Glu360, which acts as the Proton donor. Active-site residues include His391 and Lys519.

Belongs to the GPI family.

It is found in the cytoplasm. It catalyses the reaction alpha-D-glucose 6-phosphate = beta-D-fructose 6-phosphate. It functions in the pathway carbohydrate biosynthesis; gluconeogenesis. It participates in carbohydrate degradation; glycolysis; D-glyceraldehyde 3-phosphate and glycerone phosphate from D-glucose: step 2/4. Its function is as follows. Catalyzes the reversible isomerization of glucose-6-phosphate to fructose-6-phosphate. The polypeptide is Glucose-6-phosphate isomerase (Acinetobacter baumannii (strain AB307-0294)).